A 353-amino-acid chain; its full sequence is UDP-N-acetylglucosamine--N-acetylmuramyl-(pentapeptide) pyrophosphoryl-undecaprenol N-acetylglucosamine transferase (353 aa).

Residues 10–12, Asn-124, Ser-183, and Gln-283 contribute to the UDP-N-acetyl-alpha-D-glucosamine site; that span reads TGG.

Belongs to the glycosyltransferase 28 family. MurG subfamily.

Its subcellular location is the cell inner membrane. It carries out the reaction di-trans,octa-cis-undecaprenyl diphospho-N-acetyl-alpha-D-muramoyl-L-alanyl-D-glutamyl-meso-2,6-diaminopimeloyl-D-alanyl-D-alanine + UDP-N-acetyl-alpha-D-glucosamine = di-trans,octa-cis-undecaprenyl diphospho-[N-acetyl-alpha-D-glucosaminyl-(1-&gt;4)]-N-acetyl-alpha-D-muramoyl-L-alanyl-D-glutamyl-meso-2,6-diaminopimeloyl-D-alanyl-D-alanine + UDP + H(+). The protein operates within cell wall biogenesis; peptidoglycan biosynthesis. Functionally, cell wall formation. Catalyzes the transfer of a GlcNAc subunit on undecaprenyl-pyrophosphoryl-MurNAc-pentapeptide (lipid intermediate I) to form undecaprenyl-pyrophosphoryl-MurNAc-(pentapeptide)GlcNAc (lipid intermediate II). The protein is UDP-N-acetylglucosamine--N-acetylmuramyl-(pentapeptide) pyrophosphoryl-undecaprenol N-acetylglucosamine transferase of Helicobacter pylori (strain J99 / ATCC 700824) (Campylobacter pylori J99).